The sequence spans 128 residues: Ribonuclease P protein component (128 aa).

The protein belongs to the RnpA family. As to quaternary structure, consists of a catalytic RNA component (M1 or rnpB) and a protein subunit.

The enzyme catalyses Endonucleolytic cleavage of RNA, removing 5'-extranucleotides from tRNA precursor.. Functionally, RNaseP catalyzes the removal of the 5'-leader sequence from pre-tRNA to produce the mature 5'-terminus. It can also cleave other RNA substrates such as 4.5S RNA. The protein component plays an auxiliary but essential role in vivo by binding to the 5'-leader sequence and broadening the substrate specificity of the ribozyme. This is Ribonuclease P protein component from Prochlorococcus marinus (strain MIT 9215).